The sequence spans 271 residues: MPVSQSRARARDRNNVLNRAEFLSLNQPPKGTQEPRSSGRKASGPSTQPPPSSDGARERRQSQQLPEEDCMQLNPSFKGIAFNSLLAIDICMSKRLGVCAGRAASWASARSMVKLIGITSHGIPWIGGTILCLVRSSTLAGQEVLMNLLLALLLDIMTVAGVQKLIKRRGPYETSPGLLDYLTMDIYAFPAGHASRAAMVSKFFLSHLVLAVPLRVLLVLWAFCVGLSRVMIGRHHITDVISGFIIGYFQFRLVELVWMSSNTCQMLISAW.

Positions methionine 1 to aspartate 69 are disordered. Over methionine 1–methionine 112 the chain is Cytoplasmic. Polar residues predominate over residues serine 24–arginine 36. A phosphoserine mark is found at serine 43 and serine 62. An interaction with MTOR region spans residues cysteine 70 to cysteine 91. Residues valine 113–leucine 133 traverse the membrane as a helical segment. The Extracellular portion of the chain corresponds to valine 134 to glycine 141. The chain crosses the membrane as a helical span at residues glutamine 142–valine 162. Over glutamine 163–lysine 202 the chain is Cytoplasmic. The helical transmembrane segment at phenylalanine 203–phenylalanine 223 threads the bilayer. At cysteine 224–aspartate 239 the chain is on the extracellular side. The chain crosses the membrane as a helical span at residues valine 240–serine 260. The Cytoplasmic portion of the chain corresponds to serine 261 to tryptophan 271.

Belongs to the PA-phosphatase related phosphoesterase family. In terms of assembly, homo- and heterooligomer. Interacts with MTOR; controls MTOR-dependent IGF2 expression during myoblast differentiation.

It localises to the nucleus envelope. The protein localises to the endoplasmic reticulum membrane. It is found in the membrane. In terms of biological role, plays a role as negative regulator of myoblast differentiation, in part through effects on MTOR signaling. Has no detectable enzymatic activity. In Rattus norvegicus (Rat), this protein is Inactive phospholipid phosphatase 7.